Reading from the N-terminus, the 216-residue chain is MRVAIIDYGSGNLRSATKAFERAAHESGISAEIDLTCDAQRVASADRIVLPGVGAYADCRRGLDAVPGMVEALNDTVLKKARPFLGICVGMQLMSERGLEKTVTNGLGWIAGDVREMVPSDASLKIPQIGWNRIHVKHSHPIFDGIPTGDDGLHAYFVHSYMLDAKNASDVLAVTDYGGDVTAAVGRDNMVGTQFHPEKSQLLGLSFIANFLKWKP.

The 215-residue stretch at 2-216 folds into the Glutamine amidotransferase type-1 domain; the sequence is RVAIIDYGSG…FIANFLKWKP (215 aa). Cys-88 functions as the Nucleophile in the catalytic mechanism. Catalysis depends on residues His-196 and Glu-198.

In terms of assembly, heterodimer of HisH and HisF.

It localises to the cytoplasm. It carries out the reaction 5-[(5-phospho-1-deoxy-D-ribulos-1-ylimino)methylamino]-1-(5-phospho-beta-D-ribosyl)imidazole-4-carboxamide + L-glutamine = D-erythro-1-(imidazol-4-yl)glycerol 3-phosphate + 5-amino-1-(5-phospho-beta-D-ribosyl)imidazole-4-carboxamide + L-glutamate + H(+). The enzyme catalyses L-glutamine + H2O = L-glutamate + NH4(+). It functions in the pathway amino-acid biosynthesis; L-histidine biosynthesis; L-histidine from 5-phospho-alpha-D-ribose 1-diphosphate: step 5/9. IGPS catalyzes the conversion of PRFAR and glutamine to IGP, AICAR and glutamate. The HisH subunit catalyzes the hydrolysis of glutamine to glutamate and ammonia as part of the synthesis of IGP and AICAR. The resulting ammonia molecule is channeled to the active site of HisF. The polypeptide is Imidazole glycerol phosphate synthase subunit HisH (Brucella melitensis biotype 1 (strain ATCC 23456 / CCUG 17765 / NCTC 10094 / 16M)).